Consider the following 122-residue polypeptide: Large ribosomal subunit protein uL14c (122 aa).

It belongs to the universal ribosomal protein uL14 family. In terms of assembly, part of the 50S ribosomal subunit.

Its subcellular location is the plastid. The protein resides in the chloroplast. Functionally, binds to 23S rRNA. This is Large ribosomal subunit protein uL14c from Chlamydomonas reinhardtii (Chlamydomonas smithii).